A 21-amino-acid chain; its full sequence is Complement receptor 3-related protein (21 aa).

The protein localises to the secreted. Plays a role in adherence of C.albicans to buccal epithelial cells, and in biofilm formation. This chain is Complement receptor 3-related protein, found in Candida albicans (Yeast).